Reading from the N-terminus, the 1773-residue chain is Zinc finger CCCH domain-containing protein 19 (1773 aa).

The disordered stretch occupies residues 145–166 (SGDRLEENKEVSMEEEPSSHEL). Basic and acidic residues predominate over residues 147–156 (DRLEENKEVS). Positions 196–218 (GEEIESDLESKKEKVDVIEEETT) form a coiled coil. 3 disordered regions span residues 270 to 290 (IGEG…DVTE), 361 to 409 (DVDK…AGQT), and 434 to 591 (ISEM…KTVK). 2 stretches are compositionally biased toward basic and acidic residues: residues 273–286 (GAKD…KEGV) and 361–378 (DVDK…HVPE). The stretch at 403–437 (AEEAGQTVDLEEIREENQELSKELAQVDETKISEM) forms a coiled coil. Composition is skewed to basic and acidic residues over residues 444-455 (MIKDEDQEKDDN) and 497-513 (KVDR…TDTR). 2 stretches are compositionally biased toward acidic residues: residues 514–529 (IEDE…TDVA) and 551–572 (EEMT…EVEE). A compositionally biased stretch (basic residues) spans 578–588 (GGKRKRGRNTK). The short motif at 581-588 (RKRGRNTK) is the Nuclear localization signal 1 element. A PHD-type zinc finger spans residues 599 to 665 (EDVCFMCFDG…TYLCYTCMFS (67 aa)). Basic and acidic residues predominate over residues 741–751 (AKRPLKGHETN). Residues 741–797 (AKRPLKGHETNASKQGTASETDYVTDGGSDSDSSPKKRKTRSRSKSGSAEKILSSGD) form a disordered region. The segment covering 752–762 (ASKQGTASETD) has biased composition (polar residues). In terms of domain architecture, SWIB/MDM2 spans 801–884 (SDETMEWASK…LNLLDSHFLK (84 aa)). A compositionally biased stretch (basic and acidic residues) spans 903–919 (PNHVDVDENLDHPVKSG). Positions 903–935 (PNHVDVDENLDHPVKSGKDKKRKTRKKNVRKGR) are disordered. The segment covering 920–935 (KDKKRKTRKKNVRKGR) has biased composition (basic residues). The Nuclear localization signal 2 signature appears at 921-928 (DKKRKTRK). The Plus3 domain occupies 944 to 1076 (AVDMHNINLI…KAIALQEVRV (133 aa)). The span at 1139–1152 (EEIPEIHADPKMDP) shows a compositional bias: basic and acidic residues. The interval 1139–1274 (EEIPEIHADP…PETPARSSRA (136 aa)) is disordered. The segment covering 1153–1163 (DCESEDEDEKE) has biased composition (acidic residues). Over residues 1193-1212 (FSSNESWTGTSNYSNTSANR) the composition is skewed to polar residues. The residue at position 1281 (Ser-1281) is a Phosphoserine. The GYF domain maps to 1307–1361 (EKIWHYKDPSGKVQGPFSMAQLRKWNNTGYFPAKLEIWKANESPLDSVLLTDALA). Polar residues-rich tracts occupy residues 1409–1433 (RNSQ…TTPT), 1441–1469 (SRWS…QSQT), 1499–1509 (VSVNHSATLHS), and 1518–1528 (SWGSMQTDHGG). Disordered stretches follow at residues 1409 to 1469 (RNSQ…QSQT), 1485 to 1605 (QPQT…SWGQ), and 1649 to 1746 (GQTQ…QQNN). Over residues 1529-1555 (SNTPSSQNNSTSYGTPSPSVLPSQSQP) the composition is skewed to low complexity. A compositionally biased stretch (polar residues) spans 1569-1579 (SQPNAQAQAQW). Composition is skewed to low complexity over residues 1585–1602 (NNNQ…QNSS) and 1666–1677 (QSQSQSQVQAQA). Residues 1678–1708 (GTTGSGWMQPGQGIQSGNSNQNWGTQNQTAI) are compositionally biased toward polar residues. Residues 1722-1735 (GNQQQSQNGDSGYG) show a composition bias toward low complexity. Positions 1737 to 1746 (NRQSGGQQNN) are enriched in polar residues. The C3H1-type zinc finger occupies 1747 to 1773 (FKGQRVCKFFRENGHCRKGASCNYLHN).

As to quaternary structure, interacts with unmethylated histone H3 and AGO2. The interaction with AGO2 in required to direct DNA methylation and silencing. As to expression, expressed in seedlings, mostly in the vasculature and shoot apices of young seedlings.

Its subcellular location is the nucleus. Its function is as follows. Plays a central role in integrating RNA silencing and chromatin signals in 21 nt siRNA-dependent DNA methylation on cytosine pathway leading to transcriptional gene silencing of specific sequences. Involved in a chromatin-based RNA silencing pathway that encompasses both post-transcriptional gene silencing (PTGS) (e.g. RDR1, RDR6 and AGO2) and transcriptional gene silencing (TGS) (e.g. siRNA-dependent DNA methylation and histone H3) components. Mediates siRNA accumulation at specific chromatin loci. Binds H3K4me0 through its PHD to enforce low levels of H3K4 methylation and gene silencing at a subset of genomic loci. This chain is Zinc finger CCCH domain-containing protein 19 (NERD), found in Arabidopsis thaliana (Mouse-ear cress).